The sequence spans 203 residues: tRNA (guanine-N(7)-)-methyltransferase (203 aa).

S-adenosyl-L-methionine contacts are provided by Glu-34, Glu-59, Asp-86, and Asp-107. Residue Asp-107 is part of the active site. Substrate is bound by residues Lys-111, Asp-143, and 181 to 184 (TSYE).

It belongs to the class I-like SAM-binding methyltransferase superfamily. TrmB family.

It carries out the reaction guanosine(46) in tRNA + S-adenosyl-L-methionine = N(7)-methylguanosine(46) in tRNA + S-adenosyl-L-homocysteine. It participates in tRNA modification; N(7)-methylguanine-tRNA biosynthesis. Catalyzes the formation of N(7)-methylguanine at position 46 (m7G46) in tRNA. The chain is tRNA (guanine-N(7)-)-methyltransferase from Mycoplasmopsis pulmonis (strain UAB CTIP) (Mycoplasma pulmonis).